Consider the following 508-residue polypeptide: Photosystem II CP47 reaction center protein (508 aa).

The next 6 helical transmembrane spans lie at 21-36, 101-115, 140-156, 203-218, 237-252, and 457-472; these read AVHI…WAGS, IVFS…IWHW, GIHL…FGAF, IAAG…FHLS, VLSS…AFVV, and TFAL…HGAR.

This sequence belongs to the PsbB/PsbC family. PsbB subfamily. In terms of assembly, PSII is composed of 1 copy each of membrane proteins PsbA, PsbB, PsbC, PsbD, PsbE, PsbF, PsbH, PsbI, PsbJ, PsbK, PsbL, PsbM, PsbT, PsbX, PsbY, PsbZ, Psb30/Ycf12, at least 3 peripheral proteins of the oxygen-evolving complex and a large number of cofactors. It forms dimeric complexes. The cofactor is Binds multiple chlorophylls. PSII binds additional chlorophylls, carotenoids and specific lipids..

The protein localises to the plastid. The protein resides in the chloroplast thylakoid membrane. Functionally, one of the components of the core complex of photosystem II (PSII). It binds chlorophyll and helps catalyze the primary light-induced photochemical processes of PSII. PSII is a light-driven water:plastoquinone oxidoreductase, using light energy to abstract electrons from H(2)O, generating O(2) and a proton gradient subsequently used for ATP formation. The chain is Photosystem II CP47 reaction center protein from Lolium perenne (Perennial ryegrass).